The following is a 629-amino-acid chain: Neuronal acetylcholine receptor subunit alpha-4 (629 aa).

An N-terminal signal peptide occupies residues 1–30 (MEIGGSGAPPPLLLLPLLLLLGTGLLPASS). The Extracellular portion of the chain corresponds to 32-249 (IETRAHAEER…IIRRLPLFYT (218 aa)). Residue Asn-59 is glycosylated (N-linked (GlcNAc...) asparagine). Ca(2+)-binding residues include Val-78 and Glu-80. Residues Asn-109 and Asn-176 are each glycosylated (N-linked (GlcNAc...) asparagine). 2 cysteine pairs are disulfide-bonded: Cys-163–Cys-177 and Cys-227–Cys-228. The helical transmembrane segment at 250–270 (INLIIPCLLISCLTVLVFYLP) threads the bilayer. A lipid anchor (S-palmitoyl cysteine) is attached at Cys-273. Transmembrane regions (helical) follow at residues 279–299 (LCISVLLSLTVFLLLITEIIP) and 312–332 (LLFTMIFVTLSIVITVFVLNV). Residues 333–603 (HHRSPRTHTM…KYVAMVIDRI (271 aa)) lie on the Cytoplasmic side of the membrane. Disordered regions lie at residues 420–459 (ETQPTCRSPSHKVPDLKTSEVEKASPCPSPGSCHPPNSSG) and 503–529 (SLTESKPTGSPASLKTRPSQLPVSDQT). Ser-427 is subject to Phosphoserine. The span at 431–442 (KVPDLKTSEVEK) shows a compositional bias: basic and acidic residues. Residues 449 to 459 (PGSCHPPNSSG) are compositionally biased toward low complexity. Over residues 504 to 529 (LTESKPTGSPASLKTRPSQLPVSDQT) the composition is skewed to polar residues. Phosphoserine occurs at positions 540 and 543. Residues 604-624 (FLWMFIIVCLLGTVGLFLPPW) traverse the membrane as a helical segment.

Belongs to the ligand-gated ion channel (TC 1.A.9) family. Acetylcholine receptor (TC 1.A.9.1) subfamily. Alpha-4/CHRNA4 sub-subfamily. Neuronal AChR is composed of two different types of subunits: alpha and beta. CHRNA4 forms heteropentameric neuronal acetylcholine receptors with CHRNB2 and CHRNB4, as well as CHRNA5 and CHRNB3 as accesory subunits. Found in two major stoichiometric forms, LS (low agonist sensitivity): (CHRNA4)3:(CHRNB2)2 and HS (high agonist sensitivity): (CHRNA4)2:(CHRNB2)3, the two stoichiometric forms differ in their unitary conductance, calcium permeability, ACh sensitivity and potentiation by divalent cation. Cells produce predominantly an (CHRNA4)3:(CHRNB2)2 nAChR. The (CHRNA4)2:(CHRNB2)3 expression is selectively up-regulated by nicotine and has lower single channel conductance and calcium permeability. In the striatum, also forms CHRNA4:CHRNA6:CHRNB2 complexes. Also found in the stoichiometric form: (CHRNA4:CHRNB2)2:CHRNB3. Interacts with RIC3; which is required for proper folding and assembly. Interacts with LYPD6.

It localises to the synaptic cell membrane. It is found in the cell membrane. It catalyses the reaction K(+)(in) = K(+)(out). The enzyme catalyses Na(+)(in) = Na(+)(out). It carries out the reaction Ca(2+)(in) = Ca(2+)(out). With respect to regulation, activated by a myriad of ligands such as acetylcholine, cytisine, nicotine, choline and epibatidine. Channel potentiation by calcium is stoichiometry-selective, CHRNA4:CHRNB2 nACh receptor is achieved by calcium association with topographically distinct sites framed by anionic residues within the CHRNA4 subunit and between the CHRNA4 and CHRNB2 subunits. nAChR activity is inhibited by the antagonist alpha-conotoxins BuIA, PnIA, GID and MII, small disulfide-constrained peptides from cone snails. Functionally, component of neuronal acetylcholine receptors (nAChRs) that function as pentameric, ligand-gated cation channels with high calcium permeability among other activities. nAChRs are excitatory neurotrasnmitter receptors formed by a collection of nAChR subunits known to mediate synaptic transmission in the nervous system and the neuromuscular junction. Each nAchR subunit confers differential attributes to channel properties, including activation, deactivation and desensitization kinetics, pH sensitivity, cation permeability, and binding to allosteric modulators. CHRNA4 forms heteropentameric neuronal acetylcholine receptors with CHRNB2 and CHRNB4, as well as CHRNA5 and CHRNB3 as accesory subunits. Is the most abundant nAChR subtype expressed in the central nervous system. Found in two major stoichiometric forms,(CHRNA4)3:(CHRNB2)2 and (CHRNA4)2:(CHRNB2)3, the two stoichiometric forms differ in their unitary conductance, calcium permeability, ACh sensitivity and potentiation by divalent cation. Involved in the modulation of calcium-dependent signaling pathways, influences the release of neurotransmitters, including dopamine, glutamate and GABA. In Mus musculus (Mouse), this protein is Neuronal acetylcholine receptor subunit alpha-4 (Chrna4).